A 96-amino-acid chain; its full sequence is Putative pterin-4-alpha-carbinolamine dehydratase (96 aa).

The protein belongs to the pterin-4-alpha-carbinolamine dehydratase family.

It catalyses the reaction (4aS,6R)-4a-hydroxy-L-erythro-5,6,7,8-tetrahydrobiopterin = (6R)-L-erythro-6,7-dihydrobiopterin + H2O. This chain is Putative pterin-4-alpha-carbinolamine dehydratase, found in Novosphingobium aromaticivorans (strain ATCC 700278 / DSM 12444 / CCUG 56034 / CIP 105152 / NBRC 16084 / F199).